Consider the following 148-residue polypeptide: Small ribosomal subunit protein bS6 (148 aa).

A disordered region spans residues 96–148; the sequence is HEEGQSAMLTRRDDRRERDGDDRPRRREGGFDRGDRGDRGPRRPRDNEAGEGA.

Belongs to the bacterial ribosomal protein bS6 family.

In terms of biological role, binds together with bS18 to 16S ribosomal RNA. This is Small ribosomal subunit protein bS6 from Brucella abortus biovar 1 (strain 9-941).